Consider the following 389-residue polypeptide: 2-aminoethylphosphonate--pyruvate transaminase 1 (389 aa).

Lys-196 carries the N6-(pyridoxal phosphate)lysine modification.

This sequence belongs to the class-V pyridoxal-phosphate-dependent aminotransferase family. PhnW subfamily. Homodimer. Requires pyridoxal 5'-phosphate as cofactor.

The catalysed reaction is (2-aminoethyl)phosphonate + pyruvate = phosphonoacetaldehyde + L-alanine. Involved in phosphonate degradation. The sequence is that of 2-aminoethylphosphonate--pyruvate transaminase 1 from Paraburkholderia xenovorans (strain LB400).